We begin with the raw amino-acid sequence, 355 residues long: uncharacterized protein (355 aa).

Disordered regions lie at residues 1 to 121, 226 to 253, and 336 to 355; these read MPID…MELR, RLMN…KSSM, and NLHR…RKRT. Positions 24–37 are enriched in acidic residues; sequence LESESSSESDYEEV. The segment covering 65 to 87 has biased composition (polar residues); sequence ETKTSSNFQNINPVQTIDNSASE. Over residues 91 to 105 the composition is skewed to low complexity; it reads DASSAEGGSNSAASS. Residues 106–117 are compositionally biased toward acidic residues; the sequence is SEEEDSSDSEYE. A compositionally biased stretch (basic and acidic residues) spans 226 to 245; the sequence is RLMNSEEREAQDLKDAEASR.

This is an uncharacterized protein from Schizosaccharomyces pombe (strain 972 / ATCC 24843) (Fission yeast).